The primary structure comprises 184 residues: Glutathione-regulated potassium-efflux system ancillary protein KefG (184 aa).

Belongs to the NAD(P)H dehydrogenase (quinone) family. KefG subfamily. In terms of assembly, interacts with KefB.

Its subcellular location is the cell inner membrane. The enzyme catalyses a quinone + NADH + H(+) = a quinol + NAD(+). It carries out the reaction a quinone + NADPH + H(+) = a quinol + NADP(+). Functionally, regulatory subunit of a potassium efflux system that confers protection against electrophiles. Required for full activity of KefB. This is Glutathione-regulated potassium-efflux system ancillary protein KefG from Shigella dysenteriae serotype 1 (strain Sd197).